Reading from the N-terminus, the 505-residue chain is Phosphomevalonate kinase, peroxisomal (505 aa).

An N-acetylalanine modification is found at A2. Positions 57-65 (DVKLTSPQL) match the Peroxisomal targeting signal PTS2 motif. Position 177 to 187 (177 to 187 (VAKTGLGSSAA)) interacts with ATP.

The protein belongs to the GHMP kinase family. Mevalonate kinase subfamily.

It localises to the peroxisome. The enzyme catalyses (R)-5-phosphomevalonate + ATP = (R)-5-diphosphomevalonate + ADP. Its pathway is isoprenoid biosynthesis; isopentenyl diphosphate biosynthesis via mevalonate pathway; isopentenyl diphosphate from (R)-mevalonate: step 2/3. This Arabidopsis thaliana (Mouse-ear cress) protein is Phosphomevalonate kinase, peroxisomal.